Consider the following 316-residue polypeptide: tRNA dimethylallyltransferase (316 aa).

17-24 provides a ligand contact to ATP; the sequence is GPTASGKT. 19 to 24 provides a ligand contact to substrate; it reads TASGKT. Interaction with substrate tRNA regions lie at residues 42-45, 166-170, 247-252, and 280-287; these read DSAL, QRLSR, RCVGYR, and KRQITWLR.

Belongs to the IPP transferase family. Monomer. Mg(2+) serves as cofactor.

The enzyme catalyses adenosine(37) in tRNA + dimethylallyl diphosphate = N(6)-dimethylallyladenosine(37) in tRNA + diphosphate. Functionally, catalyzes the transfer of a dimethylallyl group onto the adenine at position 37 in tRNAs that read codons beginning with uridine, leading to the formation of N6-(dimethylallyl)adenosine (i(6)A). The protein is tRNA dimethylallyltransferase of Escherichia coli O6:K15:H31 (strain 536 / UPEC).